Here is an 816-residue protein sequence, read N- to C-terminus: Probable E3 ubiquitin-protein ligase hulA (816 aa).

The C2 domain occupies 1–112 (MGSNLPAQPN…QMGGDEMLTR (112 aa)). Disordered regions lie at residues 134–238 (NLST…GWER) and 254–354 (RTTT…YFVD). Positions 160–178 (VPQVAPSSSHPAASGAAPV) are enriched in low complexity. Positions 181–192 (SASNPSLNPQRV) are enriched in polar residues. A compositionally biased stretch (low complexity) spans 193 to 213 (PSTTRPSSTAAPASAAGAAAS). 2 stretches are compositionally biased toward polar residues: residues 214 to 227 (NTHG…SFED) and 254 to 267 (RTTT…NYNE). Positions 230–263 (GRLPAGWERREDNLGRTYYVDHNTRTTTWTRPSS) constitute a WW 1 domain. Basic and acidic residues predominate over residues 268 to 295 (HAQRSQREANMQLERRAHQSRMLPEDRT). Residues 296 to 310 (GANSPNLPESSQQAH) show a composition bias toward polar residues. The span at 325 to 334 (ATGATTAGTG) shows a compositional bias: low complexity. WW domains follow at residues 334-367 (GELP…DPRR) and 394-427 (GPLP…DPRL). An HECT domain is found at 483–816 (SASDLKKRLM…VEETLGFGQE (334 aa)). The active-site Glycyl thioester intermediate is Cys-784.

It belongs to the RSP5/NEDD4 family. In terms of assembly, interacts with creD.

It is found in the cytoplasm. It catalyses the reaction S-ubiquitinyl-[E2 ubiquitin-conjugating enzyme]-L-cysteine + [acceptor protein]-L-lysine = [E2 ubiquitin-conjugating enzyme]-L-cysteine + N(6)-ubiquitinyl-[acceptor protein]-L-lysine.. The protein operates within protein modification; protein ubiquitination. Its function is as follows. E3 ubiquitin-protein ligase which accepts ubiquitin from an E2 ubiquitin-conjugating enzyme in the form of a thioester and then directly transfers the ubiquitin to targeted substrates. Probably involved in the regulatory network controlling carbon source utilization. The sequence is that of Probable E3 ubiquitin-protein ligase hulA (hulA) from Neosartorya fischeri (strain ATCC 1020 / DSM 3700 / CBS 544.65 / FGSC A1164 / JCM 1740 / NRRL 181 / WB 181) (Aspergillus fischerianus).